The sequence spans 256 residues: Small ribosomal subunit protein eS1 (256 aa).

The span at 1–18 (MAVGKNKRLSKGKKGVKK) shows a compositional bias: basic residues. The interval 1–21 (MAVGKNKRLSKGKKGVKKRTV) is disordered. Ala-2 bears the N-acetylalanine; partial mark.

This sequence belongs to the eukaryotic ribosomal protein eS1 family. As to quaternary structure, component of the small ribosomal subunit. Mature ribosomes consist of a small (40S) and a large (60S) subunit. The 40S subunit contains about 33 different proteins and 1 molecule of RNA (18S). The 60S subunit contains about 49 different proteins and 3 molecules of RNA (25S, 5.8S and 5S).

The protein resides in the cytoplasm. The sequence is that of Small ribosomal subunit protein eS1 (rps1) from Neosartorya fischeri (strain ATCC 1020 / DSM 3700 / CBS 544.65 / FGSC A1164 / JCM 1740 / NRRL 181 / WB 181) (Aspergillus fischerianus).